The sequence spans 313 residues: tRNA dimethylallyltransferase (313 aa).

17–24 (GPTASGKT) contacts ATP. 19 to 24 (TASGKT) contacts substrate. 3 interaction with substrate tRNA regions span residues 42–45 (DSAL), 166–170 (QRLSR), and 247–252 (RCVGYR).

The protein belongs to the IPP transferase family. As to quaternary structure, monomer. The cofactor is Mg(2+).

It carries out the reaction adenosine(37) in tRNA + dimethylallyl diphosphate = N(6)-dimethylallyladenosine(37) in tRNA + diphosphate. Its function is as follows. Catalyzes the transfer of a dimethylallyl group onto the adenine at position 37 in tRNAs that read codons beginning with uridine, leading to the formation of N6-(dimethylallyl)adenosine (i(6)A). The protein is tRNA dimethylallyltransferase of Serratia proteamaculans (strain 568).